Reading from the N-terminus, the 147-residue chain is Large ribosomal subunit protein uL13 (147 aa).

This sequence belongs to the universal ribosomal protein uL13 family. Part of the 50S ribosomal subunit.

Functionally, this protein is one of the early assembly proteins of the 50S ribosomal subunit, although it is not seen to bind rRNA by itself. It is important during the early stages of 50S assembly. The polypeptide is Large ribosomal subunit protein uL13 (Lactobacillus acidophilus (strain ATCC 700396 / NCK56 / N2 / NCFM)).